Here is a 209-residue protein sequence, read N- to C-terminus: LexA repressor (209 aa).

A DNA-binding region (H-T-H motif) is located at residues 30 to 50 (RVEIAREIGFKSPNAAEEHLK). Residues Ser126 and Lys163 each act as for autocatalytic cleavage activity in the active site.

This sequence belongs to the peptidase S24 family. In terms of assembly, homodimer.

It carries out the reaction Hydrolysis of Ala-|-Gly bond in repressor LexA.. Represses a number of genes involved in the response to DNA damage (SOS response), including recA and lexA. In the presence of single-stranded DNA, RecA interacts with LexA causing an autocatalytic cleavage which disrupts the DNA-binding part of LexA, leading to derepression of the SOS regulon and eventually DNA repair. The polypeptide is LexA repressor (Glaesserella parasuis serovar 5 (strain SH0165) (Haemophilus parasuis)).